The primary structure comprises 760 residues: Dipeptidyl peptidase 4 (760 aa).

The Cytoplasmic segment spans residues 1–6 (MKTPWK). A helical; Signal-anchor for type II membrane protein transmembrane segment spans residues 7–28 (VLLGLLGVAALVTIITVPIVLL). The Extracellular segment spans residues 29–760 (SKDEAAADSR…HFLQQCFSLH (732 aa)). Residues N83, N90, N144, N213, N223, N315, and N328 are each glycosylated (N-linked (GlcNAc...) asparagine). Cystine bridges form between C322/C333, C379/C388, C438/C441, and C448/C466. An N-linked (GlcNAc...) asparagine glycan is attached at N514. S624 functions as the Charge relay system in the catalytic mechanism. Cysteines 643 and 756 form a disulfide. N679 carries an N-linked (GlcNAc...) asparagine glycan. Residues D702 and H734 each act as charge relay system in the active site.

The protein belongs to the peptidase S9B family. DPPIV subfamily. In terms of assembly, monomer. Homodimer. Heterodimer with Seprase (FAP). Requires homodimerization for optimal dipeptidyl peptidase activity and T-cell costimulation. Found in a membrane raft complex, at least composed of BCL10, CARD11, DPP4 and IKBKB. Associates with collagen. Interacts with PTPRC; the interaction is enhanced in an interleukin-12-dependent manner in activated lymphocytes. Interacts (via extracellular domain) with ADA; does not inhibit its dipeptidyl peptidase activity. Interacts with CAV1 (via the N-terminus); the interaction is direct. Interacts (via cytoplasmic tail) with CARD11 (via PDZ domain); its homodimerization is necessary for interaction with CARD11. Interacts with IGF2R; the interaction is direct. Interacts with GPC3. The soluble form (Dipeptidyl peptidase 4 soluble form also named SDPP) derives from the membrane form (Dipeptidyl peptidase 4 membrane form also named MDPP) by proteolytic processing. Post-translationally, N- and O-Glycosylated. In terms of processing, phosphorylated. Mannose 6-phosphate residues in the carbohydrate moiety are necessary for interaction with IGF2R in activated T-cells. Mannose 6-phosphorylation is induced during T-cell activation.

It localises to the secreted. Its subcellular location is the cell membrane. It is found in the apical cell membrane. The protein resides in the cell projection. The protein localises to the invadopodium membrane. It localises to the lamellipodium membrane. Its subcellular location is the cell junction. It is found in the membrane raft. It carries out the reaction Release of an N-terminal dipeptide, Xaa-Yaa-|-Zaa-, from a polypeptide, preferentially when Yaa is Pro, provided Zaa is neither Pro nor hydroxyproline.. Its activity is regulated as follows. Inhibited by GPC3 and diprotin A. Cell surface glycoprotein receptor involved in the costimulatory signal essential for T-cell receptor (TCR)-mediated T-cell activation. Acts as a positive regulator of T-cell coactivation, by binding at least ADA, CAV1, IGF2R, and PTPRC. Its binding to CAV1 and CARD11 induces T-cell proliferation and NF-kappa-B activation in a T-cell receptor/CD3-dependent manner. Its interaction with ADA also regulates lymphocyte-epithelial cell adhesion. In association with FAP is involved in the pericellular proteolysis of the extracellular matrix (ECM), the migration and invasion of endothelial cells into the ECM. May be involved in the promotion of lymphatic endothelial cells adhesion, migration and tube formation. When overexpressed, enhanced cell proliferation, a process inhibited by GPC3. Also acts as a serine exopeptidase with a dipeptidyl peptidase activity that regulates various physiological processes by cleaving peptides in the circulation, including many chemokines, mitogenic growth factors, neuropeptides and peptide hormones. Removes N-terminal dipeptides sequentially from polypeptides having unsubstituted N-termini provided that the penultimate residue is proline. This Mus musculus (Mouse) protein is Dipeptidyl peptidase 4 (Dpp4).